The primary structure comprises 656 residues: UV-damage endonuclease (656 aa).

Disordered regions lie at residues 1–82 (MPSR…GKEQ), 119–146 (PSVV…KEPV), 175–194 (IIEP…RPPA), 241–264 (PLQF…EPQD), 492–515 (EPCD…TLPP), 550–620 (DMVP…GPYN), and 636–656 (KREV…EFDG). Positions 13-32 (TPQSESSTFSSTLDSSAPSP) are enriched in low complexity. Basic and acidic residues-rich tracts occupy residues 48 to 82 (SEKD…GKEQ) and 135 to 146 (TNAEEREAKEPV). The segment covering 550-561 (DMVPYDRDDENR) has biased composition (basic and acidic residues). Basic residues predominate over residues 568–579 (APKKKKGGKRKR). The segment covering 583–595 (EEAAEPEEVDTAA) has biased composition (acidic residues). Over residues 596–614 (DDVKDAPEGPKEVPEEERA) the composition is skewed to basic and acidic residues. Acidic residues predominate over residues 647-656 (EVEDEGEFDG).

Belongs to the uve1/UvsE family. The cofactor is Mg(2+).

Its function is as follows. Endonuclease for the repair of UV-irradiated DNA. Involved in the excision of cyclobutane pyrimidine dimers (CPD) and 6-4 pyrimidine pyrimidones (6-4PP) which forms the UV damage repair (UVDR) pathway. This is UV-damage endonuclease (mus-18) from Neurospora crassa (strain ATCC 24698 / 74-OR23-1A / CBS 708.71 / DSM 1257 / FGSC 987).